We begin with the raw amino-acid sequence, 257 residues long: Homeobox protein EMX1 (257 aa).

The segment at residues 159–218 is a DNA-binding region (homeobox); the sequence is PKRIRTAFSPSQLLRLERAFEKNHYVVGAERKQLAGSLSLSETQVKVWFQNRRTKYKRQK. A disordered region spans residues 216-257; it reads RQKLEEEGPESEQKKKGSHHINRWRIATKQANGEDIDVTSND. Over residues 217-230 the composition is skewed to basic and acidic residues; sequence QKLEEEGPESEQKK.

This sequence belongs to the EMX homeobox family. In terms of assembly, interacts with WRD11 (via the N-terminal and the central portion of the protein); the interaction associates EMX1 with GLI3. As to expression, cerebral cortex. Expressed in the olfactory bulbs.

The protein resides in the nucleus. Functionally, transcription factor, which in cooperation with EMX2, acts to generate the boundary between the roof and archipallium in the developing brain. May function in combinations with OTX1/2 to specify cell fates in the developing central nervous system. This Mus musculus (Mouse) protein is Homeobox protein EMX1 (Emx1).